The chain runs to 242 residues: Small ribosomal subunit protein uS2 (242 aa).

Belongs to the universal ribosomal protein uS2 family.

This Shewanella denitrificans (strain OS217 / ATCC BAA-1090 / DSM 15013) protein is Small ribosomal subunit protein uS2.